We begin with the raw amino-acid sequence, 139 residues long: ATP synthase epsilon chain (139 aa).

Belongs to the ATPase epsilon chain family. In terms of assembly, F-type ATPases have 2 components, CF(1) - the catalytic core - and CF(0) - the membrane proton channel. CF(1) has five subunits: alpha(3), beta(3), gamma(1), delta(1), epsilon(1). CF(0) has three main subunits: a, b and c.

It localises to the cell inner membrane. Its function is as follows. Produces ATP from ADP in the presence of a proton gradient across the membrane. In Pseudomonas entomophila (strain L48), this protein is ATP synthase epsilon chain.